Here is a 157-residue protein sequence, read N- to C-terminus: Protein Smg homolog (157 aa).

Belongs to the Smg family.

The sequence is that of Protein Smg homolog from Alkalilimnicola ehrlichii (strain ATCC BAA-1101 / DSM 17681 / MLHE-1).